A 106-amino-acid polypeptide reads, in one-letter code: Replication restart protein PriB (106 aa).

The 100-residue stretch at 4–103 folds into the SSB domain; that stretch reads VNRLVLSGTV…LHAEQIELID (100 aa).

The protein belongs to the PriB family. Homodimer. Interacts with PriA and DnaT. Component of the replication restart primosome. Primosome assembly occurs via a 'hand-off' mechanism. PriA binds to replication forks, subsequently PriB then DnaT bind; DnaT then displaces ssDNA to generate the helicase loading substrate.

Its function is as follows. Involved in the restart of stalled replication forks, which reloads the replicative helicase on sites other than the origin of replication; the PriA-PriB pathway is the major replication restart pathway. During primosome assembly it facilitates complex formation between PriA and DnaT on DNA; stabilizes PriA on DNA. Stimulates the DNA unwinding activity of PriA helicase. The chain is Replication restart protein PriB from Pectobacterium carotovorum subsp. carotovorum (strain PC1).